Here is a 162-residue protein sequence, read N- to C-terminus: Anaerobic nitrite reductase GLB1 (162 aa).

A Globin domain is found at 9–159; that stretch reads VFSEEKEALV…LVAAIKQEMK (151 aa). Residues 42–46 carry the Homodimerization motif; it reads EIAPS. Residues K66, H70, R100, T104, and H105 each contribute to the heme b site. The Homodimerization motif lies at 112–124; it reads DGHFEVTRFALLE.

This sequence belongs to the plant globin family. In terms of assembly, homodimer. Requires heme b as cofactor. In terms of tissue distribution, seeds and roots.

The protein localises to the cytoplasm. It is found in the nucleus. It carries out the reaction Fe(III)-heme b-[protein] + nitric oxide + H2O = Fe(II)-heme b-[protein] + nitrite + 2 H(+). Phytoglobin that reduces nitrite to nitric oxide (NO) under anoxic conditions (e.g. during flooding or in waterlogged soil). May not function as an oxygen storage or transport protein. Has an unusually high affinity for O(2) through an hexacoordinate heme iron because of a very low dissociation constant. In Hordeum vulgare (Barley), this protein is Anaerobic nitrite reductase GLB1.